The sequence spans 236 residues: MDGAYGHVHNGSPMAVDGEESGAGTGTGAGADGLYPTSTDTAAHAVSLPRSVGDFAAVVRAVSAEAADALRSGAGPPAEAWPRVYRMFCDMFGRYAASPMPVFHSADPLRRAVGRYLVDLGAAPVETHAELSGRMLFCAYWCCLGHAFACSRPQMYERACARFFETRLGIGETPPADAERYWAALLNMAGAEPELFPRHAAAAAYLRARGRKLPLQLPSAHRTAKTVAVTGQSINF.

A disordered region spans residues 1–32 (MDGAYGHVHNGSPMAVDGEESGAGTGTGAGAD). The segment covering 21 to 31 (SGAGTGTGAGA) has biased composition (gly residues). A zinc finger lies at 138-150 (CAYWCCLGHAFAC).

The protein belongs to the herpesviridae US10 family. Phosphorylated.

The protein localises to the virion tegument. Its subcellular location is the host nucleus matrix. In Equine herpesvirus 1 (strain Ab4p) (EHV-1), this protein is Virion protein US10 homolog.